Consider the following 138-residue polypeptide: Acidic phospholipase A2 VP7 (138 aa).

An N-terminal signal peptide occupies residues 1 to 16; the sequence is MRTLWIVAVCLMGVEG. Cystine bridges form between Cys42–Cys131, Cys44–Cys60, Cys59–Cys111, Cys65–Cys138, Cys66–Cys104, Cys73–Cys97, and Cys91–Cys102. 3 residues coordinate Ca(2+): Tyr43, Gly45, and Gly47. His63 is an active-site residue. A Ca(2+)-binding site is contributed by Asp64. The active site involves Asp105.

The protein belongs to the phospholipase A2 family. Group II subfamily. D49 sub-subfamily. In terms of assembly, does not form a complex. Ca(2+) serves as cofactor. Expressed by the venom gland.

The protein resides in the secreted. The enzyme catalyses a 1,2-diacyl-sn-glycero-3-phosphocholine + H2O = a 1-acyl-sn-glycero-3-phosphocholine + a fatty acid + H(+). In terms of biological role, snake venom phospholipase A2 (PLA2) that is not toxic by itself, but the synergistical mixture of a basic and this acidic protein is lethal. PLA2 catalyzes the calcium-dependent hydrolysis of the 2-acyl groups in 3-sn-phosphoglycerides. This is Acidic phospholipase A2 VP7 from Daboia palaestinae (Palestine viper).